Consider the following 82-residue polypeptide: Penaeidin-3f (82 aa).

An N-terminal signal peptide occupies residues 1-19 (MRLVACLVFLASFALVCQG). Residue Gln20 is modified to Pyrrolidone carboxylic acid. Intrachain disulfides connect Cys51-Cys66, Cys55-Cys73, and Cys67-Cys74. Ser81 carries the post-translational modification Serine amide.

The protein belongs to the penaeidin family.

The protein resides in the cytoplasmic granule. Functionally, antibacterial and antifungal activity. Presents chitin-binding activity. The polypeptide is Penaeidin-3f (Penaeus vannamei (Whiteleg shrimp)).